We begin with the raw amino-acid sequence, 1040 residues long: MSTVLPESNATSRIPANDPALEKVDSEHGVEYAREKFGTALRGDRAGLKFESKFCPDDGRTPFATTAWDLRSAAIKDESGNALFEQTDCEVPASWSQLATNVVVSKYFYGDPKNTDERERSVRQLIHRVTRTISDWGLADGYFDTPEDGERFYRDLTWLSLHQHGAFNSPVWFNVGLHAQYDVEGDMCNWHWDRTENTTAQPDNPYEYPQGSACFIQSVDDNMEDIMRLACSEAMLFKFGSGTGTDLSTIRSQREKLSGGGTPSGPLSFMRVYDSIAGVVKSGGKTRRAAKMQSLKVWHPDILEFIECKWAEEKKAHALIREGYDSNFNGEAYASVCFQNANLSVRLTDDYMEAVRKNENFQTRWITDKPTTEPPSYVAKELLNKMAECAWHCGDPGVQYDTTINKWHTCPNSGAINASNPCSEYMFLDDTACNLASINLMKFVQQDGSFDHERFRAACRTFFIAQEILVDHASYPTEPIARNSHKFRPLGLGYSNLGSVIMTAGLPYDSDAARGMCGSLTALLHGEANRTSAELASVVGTFDGYVENEAPMLRVMQMHRDACDQINDDGPAELKEAARELWDGVLEIGEKYGFRNAQATVLAPTGTISFMMDCDTTGIEPDIALVKYKQLAGGGMLKIVNQTVKLGLKTLGYDADTIDEILKYVDANDTIEGAPGLQDEHLAVFDCAFKPANGVRSIGWRAHITMMAAAQPFLSGAISKTVNMPTDVTPQDIADAYFWGWELGLKAIAIYRDGSKQSQPLNTKSDEQKATDAAEAAKVETVEKIVYKPRRERLPDTRQSLTHKFSIAGHEGYLCVGLYPDGRPGEMFITMAKEGSTIGGIMDSFGTALSIAMQYGVPLEVIVNKFSHTRFEPMGHTSNKDIRIAKSVVDYIARWLGITFMSGNDYSPSAEGAAKTGGNGPDLTTAPAGATANNNSPVMAELRADAGAAVALVERATLLASLQNGVSNGSATNGHSNGQSAGGSSDGAVAERAVDGLGGQADQFSRFQTDAPSCDNCGSITVRNGNCYLCHNCGNSMGCS.

Residues Ser169, 213 to 214 (AC), Gly242, 420 to 424 (NPCSE), and 604 to 608 (PTGTI) contribute to the substrate site. Cysteines 214 and 433 form a disulfide. The active-site Proton acceptor is the Asn420. Cys422 serves as the catalytic Cysteine radical intermediate. Glu424 acts as the Proton acceptor in catalysis. Disordered regions lie at residues 909-932 (SAEGAAKTGGNGPDLTTAPAGATA) and 969-988 (GSATNGHSNGQSAGGSSDGA). Positions 969-979 (GSATNGHSNGQ) are enriched in polar residues.

It belongs to the ribonucleoside diphosphate reductase class-2 family. The cofactor is adenosylcob(III)alamin.

It carries out the reaction a 2'-deoxyribonucleoside 5'-diphosphate + [thioredoxin]-disulfide + H2O = a ribonucleoside 5'-diphosphate + [thioredoxin]-dithiol. Its function is as follows. Catalyzes the reduction of ribonucleotides to deoxyribonucleotides. May function to provide a pool of deoxyribonucleotide precursors for DNA repair during oxygen limitation and/or for immediate growth after restoration of oxygen. The polypeptide is Vitamin B12-dependent ribonucleotide reductase (nrdJ) (Rhodopirellula baltica (strain DSM 10527 / NCIMB 13988 / SH1)).